Reading from the N-terminus, the 140-residue chain is Large ribosomal subunit protein uL11 (140 aa).

Belongs to the universal ribosomal protein uL11 family. As to quaternary structure, part of the ribosomal stalk of the 50S ribosomal subunit. Interacts with L10 and the large rRNA to form the base of the stalk. L10 forms an elongated spine to which L12 dimers bind in a sequential fashion forming a multimeric L10(L12)X complex. Post-translationally, one or more lysine residues are methylated.

In terms of biological role, forms part of the ribosomal stalk which helps the ribosome interact with GTP-bound translation factors. The protein is Large ribosomal subunit protein uL11 of Caldanaerobacter subterraneus subsp. tengcongensis (strain DSM 15242 / JCM 11007 / NBRC 100824 / MB4) (Thermoanaerobacter tengcongensis).